The sequence spans 248 residues: Glutathione S-transferase omega-2 (248 aa).

A GST N-terminal domain is found at 22-101 (GVIRIYSMRF…YLDDVFPGRK (80 aa)). The Nucleophile role is filled by Cys32. Glutathione is bound by residues Lys59, Val72, and 85-86 (ES). Positions 106 to 231 (DPYERARQKM…IFLGFLNLYF (126 aa)) constitute a GST C-terminal domain.

The protein belongs to the GST superfamily. Omega family.

The enzyme catalyses RX + glutathione = an S-substituted glutathione + a halide anion + H(+). It catalyses the reaction L-dehydroascorbate + 2 glutathione = glutathione disulfide + L-ascorbate. It carries out the reaction methylarsonate + 2 glutathione + H(+) = methylarsonous acid + glutathione disulfide + H2O. In terms of biological role, exhibits glutathione-dependent thiol transferase activity. Has high dehydroascorbate reductase activity and may contribute to the recycling of ascorbic acid. Participates in the biotransformation of inorganic arsenic and reduces monomethylarsonic acid (MMA). In Rattus norvegicus (Rat), this protein is Glutathione S-transferase omega-2 (Gsto2).